The primary structure comprises 428 residues: Threonine synthase (428 aa).

K107 bears the N6-(pyridoxal phosphate)lysine mark.

It belongs to the threonine synthase family. Pyridoxal 5'-phosphate is required as a cofactor.

The catalysed reaction is O-phospho-L-homoserine + H2O = L-threonine + phosphate. The protein operates within amino-acid biosynthesis; L-threonine biosynthesis; L-threonine from L-aspartate: step 5/5. Is competitively inhibited by L-threo-3-hydroxyhomoserine phosphate. Catalyzes the gamma-elimination of phosphate from L-phosphohomoserine and the beta-addition of water to produce L-threonine. To a lesser extent, is able to slowly catalyze the deamination of L-threonine into alpha-ketobutyrate and that of L-serine and 3-chloroalanine into pyruvate. Is also able to rapidly convert vinylglycine to threonine, which proves that the pyridoxal p-quinonoid of vinylglycine is an intermediate in the TS reaction. This is Threonine synthase (thrC) from Escherichia coli (strain K12).